A 552-amino-acid chain; its full sequence is Rhodopsin kinase GRK7 (552 aa).

Position 36 is a phosphoserine; by PKA (Ser36). Positions 56–176 (FHSLCEQQPI…LASPFYDKFL (121 aa)) constitute an RGS domain. The 264-residue stretch at 191 to 454 (FEEFRVLGKG…SDDPRKHHFF (264 aa)) folds into the Protein kinase domain. ATP-binding positions include 197-205 (LGKGGFGEV) and Lys220. Asp316 serves as the catalytic Proton acceptor. Residues 455–520 (KTINFPRLEA…GAVPIAWQEE (66 aa)) enclose the AGC-kinase C-terminal domain. The residue at position 549 (Cys549) is a Cysteine methyl ester. The S-geranylgeranyl cysteine moiety is linked to residue Cys549. A propeptide spans 550 to 552 (LLL) (removed in mature form).

This sequence belongs to the protein kinase superfamily. AGC Ser/Thr protein kinase family. GPRK subfamily. In terms of assembly, interacts (when prenylated) with PDE6D; this promotes release from membranes. Post-translationally, autophosphorylated in vitro at Ser-490. Phosphorylation at Ser-36 is regulated by light and activated by cAMP.

Its subcellular location is the membrane. The catalysed reaction is L-threonyl-[rhodopsin] + ATP = O-phospho-L-threonyl-[rhodopsin] + ADP + H(+). It catalyses the reaction L-seryl-[rhodopsin] + ATP = O-phospho-L-seryl-[rhodopsin] + ADP + H(+). Inhibited by phosphorylation of Ser-36. In terms of biological role, retina-specific kinase involved in the shutoff of the photoresponse and adaptation to changing light conditions via cone opsin phosphorylation, including rhodopsin (RHO). The protein is Rhodopsin kinase GRK7 (GRK7) of Bos taurus (Bovine).